The following is a 375-amino-acid chain: DNA replication and repair protein RecF (375 aa).

30–37 (GENAQGKT) is an ATP binding site.

The protein belongs to the RecF family.

Its subcellular location is the cytoplasm. Its function is as follows. The RecF protein is involved in DNA metabolism; it is required for DNA replication and normal SOS inducibility. RecF binds preferentially to single-stranded, linear DNA. It also seems to bind ATP. The protein is DNA replication and repair protein RecF of Latilactobacillus sakei subsp. sakei (strain 23K) (Lactobacillus sakei subsp. sakei).